A 98-amino-acid polypeptide reads, in one-letter code: Lipolysis-activating peptide 1-beta chain (98 aa).

The first 22 residues, 1–22 (MANVQVIFVAYIAVIAFSMVYG), serve as a signal peptide directing secretion. Residues 23 to 91 (DDYKPFGEHN…FLKAMEKQCP (69 aa)) enclose the LCN-type CS-alpha/beta domain. 3 disulfide bridges follow: Cys-37-Cys-60, Cys-45-Cys-70, and Cys-49-Cys-72.

It belongs to the long (3 C-C) scorpion toxin superfamily. In terms of assembly, homodimer; disulfide-linked or monomer (edited version) or heterodimer of an alpha chain (AC B8XH01) and this beta chain (non-edited version). As to expression, expressed by the venom gland.

It is found in the secreted. Its function is as follows. The homodimer inhibits HMG-CoA reductase (HMGCR) (32% of inhibition produced by 0.6 uM), a glycoprotein involved in the control of cholesterol biosynthesis. The inhibitory effects of bumarsin are seen at much lower concentrations (0.6 uM) than that for statins such as atorvastatin (5 mM) and simvastatin (10 uM). In addition to inhibition of HMG-CoA reductase, this protein lowers cholesterol levels by inducing steroid hormone synthesis via StAR, and by increasing reverse cholesterol transport mediated by the induction of ABCA1 and APOA1. The heterodimer non-edited LVP1 induces lipolysis in rat adipocytes. Induction of lipolysis by LVP1 appears to be mediated through the beta-2 adrenergic receptor pathway (ADRB2). In terms of biological role, the monomer edited version, similar to alpha-toxins, may modulate voltage-gated sodium channels (Nav) and may block voltage-gated potassium channels (Kv). The sequence is that of Lipolysis-activating peptide 1-beta chain from Buthus israelis (Israeli scorpion).